Here is a 356-residue protein sequence, read N- to C-terminus: Phospho-N-acetylmuramoyl-pentapeptide-transferase (356 aa).

10 consecutive transmembrane segments (helical) span residues 25 to 45 (TIAAMLTSGLIVFLFGPSIIA), 70 to 90 (GTPTMGGLMILTGIVVSAFLW), 93 to 113 (LSNIYFWVSLLVMLSFGAIGF), 138 to 158 (FFVAAIAAFIILQIGSSGFAL), 164 to 184 (YLIHLGWFFIPFSAFVIVATG), 195 to 215 (GLAIVPVMVAALSFALIAYLC), 235 to 255 (LAVLLGAVVGAGLGFLWFNAP), 258 to 278 (AIFMGDTGSLALGGLLGTVAV), 284 to 304 (IVLVLIGGLFVVEAFSVVIQV), and 333 to 353 (QVVIRFWIISIVLALIGLSTL).

This sequence belongs to the glycosyltransferase 4 family. MraY subfamily. The cofactor is Mg(2+).

The protein localises to the cell inner membrane. It carries out the reaction UDP-N-acetyl-alpha-D-muramoyl-L-alanyl-gamma-D-glutamyl-meso-2,6-diaminopimeloyl-D-alanyl-D-alanine + di-trans,octa-cis-undecaprenyl phosphate = di-trans,octa-cis-undecaprenyl diphospho-N-acetyl-alpha-D-muramoyl-L-alanyl-D-glutamyl-meso-2,6-diaminopimeloyl-D-alanyl-D-alanine + UMP. It functions in the pathway cell wall biogenesis; peptidoglycan biosynthesis. Functionally, catalyzes the initial step of the lipid cycle reactions in the biosynthesis of the cell wall peptidoglycan: transfers peptidoglycan precursor phospho-MurNAc-pentapeptide from UDP-MurNAc-pentapeptide onto the lipid carrier undecaprenyl phosphate, yielding undecaprenyl-pyrophosphoryl-MurNAc-pentapeptide, known as lipid I. The sequence is that of Phospho-N-acetylmuramoyl-pentapeptide-transferase from Bartonella tribocorum (strain CIP 105476 / IBS 506).